Consider the following 206-residue polypeptide: Large ribosomal subunit protein uL4 (206 aa).

Residues 51-76 (AKTRAEVSGGGIKPWRQKGTGRARQG) are disordered.

Belongs to the universal ribosomal protein uL4 family. Part of the 50S ribosomal subunit.

One of the primary rRNA binding proteins, this protein initially binds near the 5'-end of the 23S rRNA. It is important during the early stages of 50S assembly. It makes multiple contacts with different domains of the 23S rRNA in the assembled 50S subunit and ribosome. Functionally, forms part of the polypeptide exit tunnel. The chain is Large ribosomal subunit protein uL4 from Clostridium kluyveri (strain ATCC 8527 / DSM 555 / NBRC 12016 / NCIMB 10680 / K1).